A 385-amino-acid chain; its full sequence is 1-deoxy-D-xylulose 5-phosphate reductoisomerase (385 aa).

Residues T10, G11, S12, I13, K37, and N124 each coordinate NADPH. K125 lines the 1-deoxy-D-xylulose 5-phosphate pocket. E126 lines the NADPH pocket. D150 serves as a coordination point for Mn(2+). The 1-deoxy-D-xylulose 5-phosphate site is built by S151, E152, S176, and H199. E152 provides a ligand contact to Mn(2+). G205 is an NADPH binding site. 4 residues coordinate 1-deoxy-D-xylulose 5-phosphate: S212, N217, K218, and E221. A Mn(2+)-binding site is contributed by E221.

This sequence belongs to the DXR family. Mg(2+) serves as cofactor. It depends on Mn(2+) as a cofactor.

It carries out the reaction 2-C-methyl-D-erythritol 4-phosphate + NADP(+) = 1-deoxy-D-xylulose 5-phosphate + NADPH + H(+). The protein operates within isoprenoid biosynthesis; isopentenyl diphosphate biosynthesis via DXP pathway; isopentenyl diphosphate from 1-deoxy-D-xylulose 5-phosphate: step 1/6. Functionally, catalyzes the NADPH-dependent rearrangement and reduction of 1-deoxy-D-xylulose-5-phosphate (DXP) to 2-C-methyl-D-erythritol 4-phosphate (MEP). The chain is 1-deoxy-D-xylulose 5-phosphate reductoisomerase from Clostridium botulinum (strain Loch Maree / Type A3).